Here is a 252-residue protein sequence, read N- to C-terminus: Coenzyme F420:L-glutamate ligase (252 aa).

GTP is bound by residues 11–14 (MPLV), 45–46 (ET), and lysine 50. Aspartate 115 serves as a coordination point for a divalent metal cation. Position 118 (asparagine 118) interacts with GTP. A divalent metal cation contacts are provided by aspartate 156, threonine 157, and glutamine 214. 212–219 (MGQADEGV) provides a ligand contact to GTP.

This sequence belongs to the CofE family. As to quaternary structure, homodimer. It depends on Mg(2+) as a cofactor. Requires Mn(2+) as cofactor. K(+) is required as a cofactor.

It catalyses the reaction oxidized coenzyme F420-0 + GTP + L-glutamate = oxidized coenzyme F420-1 + GDP + phosphate + H(+). The catalysed reaction is oxidized coenzyme F420-1 + GTP + L-glutamate = oxidized coenzyme F420-2 + GDP + phosphate + H(+). The protein operates within cofactor biosynthesis; coenzyme F420 biosynthesis. Its function is as follows. Catalyzes the GTP-dependent successive addition of two or more gamma-linked L-glutamates to the L-lactyl phosphodiester of 7,8-didemethyl-8-hydroxy-5-deazariboflavin (F420-0) to form coenzyme F420-0-glutamyl-glutamate (F420-2) or polyglutamated F420 derivatives. The sequence is that of Coenzyme F420:L-glutamate ligase from Methanothermobacter thermautotrophicus (strain ATCC 29096 / DSM 1053 / JCM 10044 / NBRC 100330 / Delta H) (Methanobacterium thermoautotrophicum).